The primary structure comprises 202 residues: Thymidine kinase (202 aa).

Residues 16-23 and 99-102 each bind ATP; these read GPMFSGKS and DEVQ. The active-site Proton acceptor is Glu-100. 4 residues coordinate Zn(2+): Cys-156, Cys-159, Cys-194, and His-197.

Belongs to the thymidine kinase family. As to quaternary structure, homotetramer.

Its subcellular location is the cytoplasm. The enzyme catalyses thymidine + ATP = dTMP + ADP + H(+). The chain is Thymidine kinase from Deinococcus deserti (strain DSM 17065 / CIP 109153 / LMG 22923 / VCD115).